A 284-amino-acid polypeptide reads, in one-letter code: Bifunctional protein FolD (284 aa).

NADP(+) is bound by residues 166 to 168 and Ser191; that span reads GRS.

Belongs to the tetrahydrofolate dehydrogenase/cyclohydrolase family. Homodimer.

It carries out the reaction (6R)-5,10-methylene-5,6,7,8-tetrahydrofolate + NADP(+) = (6R)-5,10-methenyltetrahydrofolate + NADPH. The enzyme catalyses (6R)-5,10-methenyltetrahydrofolate + H2O = (6R)-10-formyltetrahydrofolate + H(+). It participates in one-carbon metabolism; tetrahydrofolate interconversion. Functionally, catalyzes the oxidation of 5,10-methylenetetrahydrofolate to 5,10-methenyltetrahydrofolate and then the hydrolysis of 5,10-methenyltetrahydrofolate to 10-formyltetrahydrofolate. This is Bifunctional protein FolD from Delftia acidovorans (strain DSM 14801 / SPH-1).